A 417-amino-acid polypeptide reads, in one-letter code: MSISLSSLIFLPIWINMAQMQQGGSNETEQTAALKDLLSRIDLDELMKKDEPPFDFPDTLEGFEYAFNEKGQLRHIKTGEPFVFNYREDLHRWNQKRYEALGEIITRYVYELLESDCNLKKISIPVDATESEPKSFIFMSEDALTNPQKLMVLIHGSGVVRAGQWARRLIINEDLDSGTQIPFIKRAMDEGYGVIVLNPNENYIEVEKQKMHKQSSSSDGTDEPAGKRERRDKVSKETKKRRDFYEKYRNPQKEKEMMQLFIRENGSPEEHAVYVWDHFIAQAAAENVFFVAHSYGGLAFVELMIQREADVKSKVTAVALTDSVHNVWHQEAGKTIREWMRENCCNWVSSSEPLDTSVESMLPDCPRVSAGTDRHELTSWKSFPSIFKFFAEASEAKSSSQKPALTRRSHRIKHEEL.

Residues Met-1–Ala-18 form the signal peptide. Asn-26 carries an N-linked (GlcNAc...) asparagine glycan. The tract at residues Lys-208 to Tyr-248 is disordered. The segment covering Pro-224 to Glu-237 has biased composition (basic and acidic residues). Ser-294 (nucleophile) is an active-site residue. The disordered stretch occupies residues Ser-398–Leu-417. Residues Leu-405–Leu-417 are compositionally biased toward basic residues. The Prevents secretion from ER signature appears at His-414–Leu-417.

The protein belongs to the ARB2A family. In terms of assembly, interacts with AGO2. Found in a complex, composed of AGO2, CHD7 and ARB2A.

Its subcellular location is the nucleus. It is found in the cytoplasm. It localises to the endoplasmic reticulum. Its function is as follows. Plays a role in the regulation of alternative splicing, by interacting with AGO2 and CHD7. Seems to be required for stabilizing protein-protein interactions at the chromatin-spliceosome interface. May have hydrolase activity. This Mus musculus (Mouse) protein is Cotranscriptional regulator ARB2A (Arb2a).